The primary structure comprises 2153 residues: Genome polyprotein (2153 aa).

Residue Gly-2 is the site of N-myristoyl glycine; by host attachment. The tract at residues His-213–Asp-240 is disordered. The segment covering Pro-216–Arg-232 has biased composition (polar residues). Positions Glu-565–Val-584 are amphipathic alpha-helix. Catalysis depends on for protease 2A activity residues His-864 and Asp-880. Zn(2+) contacts are provided by Cys-897 and Cys-899. Cys-951 serves as the catalytic For protease 2A activity. Zn(2+) is bound by residues Cys-957 and His-959. A membrane-binding region spans residues Ser-1088–Gln-1158. The interval Ser-1088 to Thr-1224 is oligomerization. The RNA-binding stretch occupies residues Ser-1109–Gly-1113. In terms of domain architecture, SF3 helicase spans Thr-1187–Val-1346. Gly-1214–Ser-1221 is an ATP binding site. Residues Cys-1353, Cys-1365, and Cys-1370 each coordinate Zn(2+). The C4-type; degenerate zinc-finger motif lies at Cys-1353–Cys-1370. An RNA-binding region spans residues Glu-1397–Val-1404. Residues Leu-1408–Gln-1413 are oligomerization. An intramembrane segment occupies Val-1460–Leu-1480. Tyr-1491 is modified (O-(5'-phospho-RNA)-tyrosine). Residues Gly-1511–Phe-1689 form the Peptidase C3 domain. Active-site for protease 3C activity residues include His-1550, Glu-1581, and Cys-1657. The region spanning Gly-1920–Glu-2033 is the RdRp catalytic domain. Mg(2+) contacts are provided by Asp-1926 and Asp-2019.

It belongs to the picornaviruses polyprotein family. In terms of assembly, interacts with capsid protein VP1 and capsid protein VP3 to form heterotrimeric protomers. Interacts with capsid protein VP0, and capsid protein VP3 to form heterotrimeric protomers. Five protomers subsequently associate to form pentamers which serve as building blocks for the capsid. Interacts with capsid protein VP2, capsid protein VP3 and capsid protein VP4 following cleavage of capsid protein VP0. Interacts (via C-terminus) with capsid protein VP4 (via C-terminus). Interacts with host CDHR3 (via N-terminus); this interaction occurs near each threefold vertex of the capsid and allows the virus attachment and entry into the host cell. As to quaternary structure, interacts with capsid protein VP1 and capsid protein VP3 in the mature capsid. Interacts with host CDHR3 (via N-terminus); this interaction occurs near each threefold vertex of the capsid and allows the virus attachment and entry into the host cell. In terms of assembly, interacts with capsid protein VP0 and capsid protein VP1 to form heterotrimeric protomers. Five protomers subsequently associate to form pentamers which serve as building blocks for the capsid. Interacts with capsid protein VP4 in the mature capsid. Interacts with protein 2C; this interaction may be important for virion morphogenesis. Interacts with host CDHR3 (via N-terminus); this interaction occurs near each threefold vertex of the capsid and allows the virus attachment and entry into the host cell. Interacts (via C-terminus) with capsid protein VP1 (via C-terminus). Interacts with capsid protein VP3. As to quaternary structure, homodimer. In terms of assembly, homohexamer; forms a hexameric ring structure with 6-fold symmetry characteristic of AAA+ ATPases. Interacts (via N-terminus) with host RTN3 (via reticulon domain); this interaction is important for viral replication. Interacts with capsid protein VP3; this interaction may be important for virion morphogenesis. Interacts with protein 3CD. As to quaternary structure, homodimer. Interacts with host GBF1. Interacts (via GOLD domain) with host ACBD3 (via GOLD domain); this interaction allows the formation of a viral protein 3A/ACBD3 heterotetramer with a 2:2 stoichiometry, which will stimulate the recruitment of host PI4KB in order to synthesize PI4P at the viral RNA replication sites. In terms of assembly, interacts with RNA-directed RNA polymerase. Interacts with protein 3AB and with RNA-directed RNA polymerase. As to quaternary structure, interacts with Viral protein genome-linked and with protein 3CD. Mg(2+) serves as cofactor. In terms of processing, specific enzymatic cleavages in vivo by the viral proteases yield processing intermediates and the mature proteins. Post-translationally, myristoylation is required for the formation of pentamers during virus assembly. Further assembly of 12 pentamers and a molecule of genomic RNA generates the provirion. During virion maturation, immature virions are rendered infectious following cleavage of VP0 into VP4 and VP2. This maturation seems to be an autocatalytic event triggered by the presence of RNA in the capsid and it is followed by a conformational change infectious virion. In terms of processing, myristoylation is required during RNA encapsidation and formation of the mature virus particle. Post-translationally, VPg is uridylylated by the polymerase into VPg-pUpU. This acts as a nucleotide-peptide primer for the genomic RNA replication.

The protein localises to the virion. Its subcellular location is the host cytoplasm. The protein resides in the host cytoplasmic vesicle membrane. It is found in the host nucleus. It catalyses the reaction a ribonucleoside 5'-triphosphate + H2O = a ribonucleoside 5'-diphosphate + phosphate + H(+). The catalysed reaction is Selective cleavage of Gln-|-Gly bond in the poliovirus polyprotein. In other picornavirus reactions Glu may be substituted for Gln, and Ser or Thr for Gly.. It carries out the reaction Selective cleavage of Tyr-|-Gly bond in the picornavirus polyprotein.. The enzyme catalyses RNA(n) + a ribonucleoside 5'-triphosphate = RNA(n+1) + diphosphate. With respect to regulation, replication or transcription is subject to high level of random mutations by the nucleotide analog ribavirin. Forms an icosahedral capsid of pseudo T=3 symmetry with capsid proteins VP2 and VP3. The capsid is 300 Angstroms in diameter, composed of 60 copies of each capsid protein and enclosing the viral positive strand RNA genome. Capsid protein VP1 mainly forms the vertices of the capsid. The VP1 C-termini form 60 dominant spike-like protrusions on the surface of the virion. Capsid protein VP1 interacts with host cell receptor CDHR3 to provide virion attachment to target host cells. This attachment induces virion internalization. Tyrosine kinases are probably involved in the entry process. After binding to its receptor, the capsid undergoes conformational changes. Capsid protein VP1 N-terminus (that contains an amphipathic alpha-helix) and capsid protein VP4 are externalized. Together, they shape a pore in the host membrane through which viral genome is translocated to host cell cytoplasm. Functionally, forms an icosahedral capsid of pseudo T=3 symmetry with capsid proteins VP2 and VP3. The capsid is 300 Angstroms in diameter, composed of 60 copies of each capsid protein and enclosing the viral positive strand RNA genome. Its function is as follows. Lies on the inner surface of the capsid shell. After binding to the host receptor, the capsid undergoes conformational changes. Capsid protein VP4 is released, Capsid protein VP1 N-terminus is externalized, and together, they shape a pore in the host membrane through which the viral genome is translocated into the host cell cytoplasm. In terms of biological role, component of immature procapsids, which is cleaved into capsid proteins VP4 and VP2 after maturation. Allows the capsid to remain inactive before the maturation step. Cysteine protease that cleaves viral polyprotein and specific host proteins. It is responsible for the autocatalytic cleavage between the P1 and P2 regions, which is the first cleavage occurring in the polyprotein. Also cleaves the host translation initiation factor EIF4G1, in order to shut down the capped cellular mRNA translation. Inhibits the host nucleus-cytoplasm protein and RNA trafficking by cleaving host members of the nuclear pores. Counteracts stress granule formation probably by antagonizing its assembly or promoting its dissassembly. Functionally, plays an essential role in the virus replication cycle by acting as a viroporin. Creates a pore in the host endoplasmic reticulum and as a consequence releases Ca2+ in the cytoplasm of infected cell. In turn, high levels of cytoplasmic calcium may trigger membrane trafficking and transport of viral ER-associated proteins to viroplasms, sites of viral genome replication. Its function is as follows. Induces and associates with structural rearrangements of intracellular membranes. Displays RNA-binding, nucleotide binding and NTPase activities. May play a role in virion morphogenesis and viral RNA encapsidation by interacting with the capsid protein VP3. In terms of biological role, localizes the viral replication complex to the surface of membranous vesicles. Together with protein 3CD binds the Cis-Active RNA Element (CRE) which is involved in RNA synthesis initiation. Acts as a cofactor to stimulate the activity of 3D polymerase, maybe through a nucleid acid chaperone activity. Localizes the viral replication complex to the surface of membranous vesicles. It inhibits host cell endoplasmic reticulum-to-Golgi apparatus transport and causes the disassembly of the Golgi complex, possibly through GBF1 interaction. This would result in depletion of MHC, trail receptors and IFN receptors at the host cell surface. Plays an essential role in viral RNA replication by recruiting ACBD3 and PI4KB at the viral replication sites, thereby allowing the formation of the rearranged membranous structures where viral replication takes place. Functionally, acts as a primer for viral RNA replication and remains covalently bound to viral genomic RNA. VPg is uridylylated prior to priming replication into VPg-pUpU. The oriI viral genomic sequence may act as a template for this. The VPg-pUpU is then used as primer on the genomic RNA poly(A) by the RNA-dependent RNA polymerase to replicate the viral genome. During genome replication, the VPg-RNA linkage is removed by the host TDP2, thereby accelerating replication. During the late stage of the replication cycle, host TDP2 is excluded from sites of viral RNA synthesis and encapsidation, allowing for the generation of progeny virions. Its function is as follows. Involved in the viral replication complex and viral polypeptide maturation. It exhibits protease activity with a specificity and catalytic efficiency that is different from protease 3C. Protein 3CD lacks polymerase activity. Protein 3CD binds to the 5'UTR of the viral genome. In terms of biological role, major viral protease that mediates proteolytic processing of the polyprotein. Cleaves host EIF5B, contributing to host translation shutoff. Also cleaves host PABPC1, contributing to host translation shutoff. Replicates the viral genomic RNA on the surface of intracellular membranes. May form linear arrays of subunits that propagate along a strong head-to-tail interaction called interface-I. Covalently attaches UMP to a tyrosine of VPg, which is used to prime RNA synthesis. The positive stranded RNA genome is first replicated at virus induced membranous vesicles, creating a dsRNA genomic replication form. This dsRNA is then used as template to synthesize positive stranded RNA genomes. ss(+)RNA genomes are either translated, replicated or encapsidated. The chain is Genome polyprotein from Homo sapiens (Human).